Here is a 787-residue protein sequence, read N- to C-terminus: ISWI one complex protein 3 (787 aa).

A compositionally biased stretch (polar residues) spans 1–22 (MDSPSNSIQNLQQEAQGSSSAQ). Disordered stretches follow at residues 1 to 137 (MDSP…AHEQ), 672 to 693 (ILEQ…LPKD), and 749 to 787 (TEYD…RQRT). Residues 40–50 (DQSVSVSQSSD) show a composition bias toward low complexity. The span at 79–92 (KPKRKRPAPPKKKA) shows a compositional bias: basic residues. The span at 100–137 (SNDKVEKKKTTSIAKDGKPTLKTNDKKVAPKPKPAHEQ) shows a compositional bias: basic and acidic residues. Residues 675-689 (QKSTTDNNPSINTNP) are compositionally biased toward polar residues. Over residues 751–777 (YDSEEYVDDEEDDEADIYDDNDNDSSF) the composition is skewed to acidic residues. A compositionally biased stretch (basic and acidic residues) spans 778 to 787 (DDGRVKRQRT).

As to quaternary structure, component of the ISW1A complex, which at least consists of ISW1 and IOC3.

The protein resides in the nucleus. Functionally, functions as a component of the ISW1A complex, which acts in remodeling the chromatin by catalyzing an ATP-dependent alteration in the structure of nucleosomal DNA. The ISW1A complex represses gene expression at initiation through specific positioning of a promoter proximal dinucleosome. The chain is ISWI one complex protein 3 (IOC3) from Saccharomyces cerevisiae (strain ATCC 204508 / S288c) (Baker's yeast).